The sequence spans 540 residues: 2-succinyl-5-enolpyruvyl-6-hydroxy-3-cyclohexene-1-carboxylate synthase (540 aa).

It belongs to the TPP enzyme family. MenD subfamily. In terms of assembly, homodimer. It depends on Mg(2+) as a cofactor. Mn(2+) is required as a cofactor. Requires thiamine diphosphate as cofactor.

The catalysed reaction is isochorismate + 2-oxoglutarate + H(+) = 5-enolpyruvoyl-6-hydroxy-2-succinyl-cyclohex-3-ene-1-carboxylate + CO2. It functions in the pathway quinol/quinone metabolism; 1,4-dihydroxy-2-naphthoate biosynthesis; 1,4-dihydroxy-2-naphthoate from chorismate: step 2/7. Its pathway is quinol/quinone metabolism; menaquinone biosynthesis. Functionally, catalyzes the thiamine diphosphate-dependent decarboxylation of 2-oxoglutarate and the subsequent addition of the resulting succinic semialdehyde-thiamine pyrophosphate anion to isochorismate to yield 2-succinyl-5-enolpyruvyl-6-hydroxy-3-cyclohexene-1-carboxylate (SEPHCHC). The chain is 2-succinyl-5-enolpyruvyl-6-hydroxy-3-cyclohexene-1-carboxylate synthase from Mycobacteroides abscessus (strain ATCC 19977 / DSM 44196 / CCUG 20993 / CIP 104536 / JCM 13569 / NCTC 13031 / TMC 1543 / L948) (Mycobacterium abscessus).